The sequence spans 1253 residues: Methionine synthase (1253 aa).

The region spanning 6–326 is the Hcy-binding domain; that stretch reads QDEIEAILRK…DHIREIAEAV (321 aa). Residues cysteine 248, cysteine 311, and cysteine 312 each contribute to the Zn(2+) site. Positions 359 to 620 constitute a Pterin-binding domain; it reads FVNIGERCNV…IHKDLLQLCE (262 aa). (6S)-5,6,7,8-tetrahydrofolate contacts are provided by residues 370–372, aspartate 437, asparagine 458, aspartate 525, asparagine 567, arginine 573, and arginine 579; that span reads GSK. In terms of domain architecture, B12-binding N-terminal spans 650–747; it reads QTDEWRNGSI…FMEKEREEAR (98 aa). Methylcob(III)alamin is bound by residues glutamate 697, 770–774, histidine 773, serine 818, threonine 822, and alanine 874; that span reads GDVHD. The 136-residue stretch at 760–895 folds into the B12-binding domain; that stretch reads QGTIVLATVK…DENLKDDYFE (136 aa). An AdoMet activation domain is found at 911–1253; it reads SLKERKYLPL…LGPILGYDTD (343 aa). S-adenosyl-L-methionine-binding positions include aspartate 962, arginine 1160, and 1215–1216; that span reads YF. Threonine 1252 is subject to Phosphothreonine.

Belongs to the vitamin-B12 dependent methionine synthase family. Monomer. Dimer. Forms a multiprotein complex with MMACHC, MMADHC and MTRR. It depends on methylcob(III)alamin as a cofactor. Zn(2+) serves as cofactor.

The protein resides in the cytoplasm. It catalyses the reaction (6S)-5-methyl-5,6,7,8-tetrahydrofolate + L-homocysteine = (6S)-5,6,7,8-tetrahydrofolate + L-methionine. It functions in the pathway amino-acid biosynthesis; L-methionine biosynthesis via de novo pathway; L-methionine from L-homocysteine (MetH route): step 1/1. In terms of biological role, catalyzes the transfer of a methyl group from methylcob(III)alamin (MeCbl) to homocysteine, yielding enzyme-bound cob(I)alamin and methionine in the cytosol. MeCbl is an active form of cobalamin (vitamin B12) used as a cofactor for methionine biosynthesis. Cob(I)alamin form is regenerated to MeCbl by a transfer of a methyl group from 5-methyltetrahydrofolate. The processing of cobalamin in the cytosol occurs in a multiprotein complex composed of at least MMACHC, MMADHC, MTRR (methionine synthase reductase) and MTR which may contribute to shuttle safely and efficiently cobalamin towards MTR in order to produce methionine. The protein is Methionine synthase (Mtr) of Rattus norvegicus (Rat).